The primary structure comprises 299 residues: Porphobilinogen deaminase (299 aa).

Residue Cys-234 is modified to S-(dipyrrolylmethanemethyl)cysteine.

This sequence belongs to the HMBS family. In terms of assembly, monomer. Dipyrromethane is required as a cofactor.

The catalysed reaction is 4 porphobilinogen + H2O = hydroxymethylbilane + 4 NH4(+). The protein operates within porphyrin-containing compound metabolism; protoporphyrin-IX biosynthesis; coproporphyrinogen-III from 5-aminolevulinate: step 2/4. Tetrapolymerization of the monopyrrole PBG into the hydroxymethylbilane pre-uroporphyrinogen in several discrete steps. In Corynebacterium efficiens (strain DSM 44549 / YS-314 / AJ 12310 / JCM 11189 / NBRC 100395), this protein is Porphobilinogen deaminase.